A 308-amino-acid chain; its full sequence is Putative S-adenosyl-L-methionine-dependent methyltransferase Mmcs_1045 (308 aa).

S-adenosyl-L-methionine is bound by residues Asp133 and 162 to 163 (DL).

It belongs to the UPF0677 family.

Its function is as follows. Exhibits S-adenosyl-L-methionine-dependent methyltransferase activity. This chain is Putative S-adenosyl-L-methionine-dependent methyltransferase Mmcs_1045, found in Mycobacterium sp. (strain MCS).